A 298-amino-acid polypeptide reads, in one-letter code: uncharacterized protein (298 aa).

The next 10 helical transmembrane spans lie at 5–25 (ILFG…MSAF), 36–56 (MENV…IYPF), 76–96 (VVVG…ISLA), 97–117 (TATA…PLLL), 124–144 (SALI…DPSV), 147–167 (VGLV…LAYI), 181–201 (VILA…FIDI), 216–236 (ILWI…LTYA), 244–264 (IIAP…LYLG), and 272–292 (SSLG…PALL). The EamA 1 domain maps to 17–141 (LCFGIMSAFV…GLVGVVLISD (125 aa)). One can recognise an EamA 2 domain in the interval 183-288 (LAFAFGMSLL…ILCSGLLIAL (106 aa)).

The protein belongs to the EamA transporter family.

The protein resides in the cell membrane. This is an uncharacterized protein from Helicobacter pylori (strain J99 / ATCC 700824) (Campylobacter pylori J99).